The sequence spans 182 residues: Ribosome maturation factor RimM (182 aa).

The 81-residue stretch at 102-182 folds into the PRC barrel domain; sequence GEGDYYWKDL…TIEVDWDPGF (81 aa).

Belongs to the RimM family. In terms of assembly, binds ribosomal protein uS19.

Its subcellular location is the cytoplasm. An accessory protein needed during the final step in the assembly of 30S ribosomal subunit, possibly for assembly of the head region. Essential for efficient processing of 16S rRNA. May be needed both before and after RbfA during the maturation of 16S rRNA. It has affinity for free ribosomal 30S subunits but not for 70S ribosomes. This chain is Ribosome maturation factor RimM, found in Pectobacterium carotovorum subsp. carotovorum (strain PC1).